Here is a 242-residue protein sequence, read N- to C-terminus: MNQVARGAGAKRYADAKAALAGVVADGQTLAVGGFGLCGIPEALITALRDSAVSGLTVISNNAGVDGFGLGQLLATRQIRKMISSYVGENKEFERQYLAGELELEFNPQGTLAERLRAGGAGIPAFYTATGYGTIVADGKETREFDGKHYVLETALQADVALIKAWRADTAGNLVFRKTARNFNPACAMAGRICIAEVEEIVELGAIDPDQVHLPGIYVDRLVLNATPEKRIEQRTVRQGDK.

33-39 (GGFGLCG) contacts CoA.

This sequence belongs to the 3-oxoacid CoA-transferase subunit A family. Heterodimer of a subunit A and a subunit B.

It catalyses the reaction a 3-oxo acid + succinyl-CoA = a 3-oxoacyl-CoA + succinate. The protein operates within bacterial outer membrane biogenesis; lipopolysaccharide biosynthesis. This is Succinyl-CoA:3-ketoacid coenzyme A transferase subunit A (lpsI) from Xanthomonas campestris pv. campestris (strain B100).